A 699-amino-acid polypeptide reads, in one-letter code: Glycine--tRNA ligase beta subunit (699 aa).

It belongs to the class-II aminoacyl-tRNA synthetase family. Tetramer of two alpha and two beta subunits.

The protein resides in the cytoplasm. It catalyses the reaction tRNA(Gly) + glycine + ATP = glycyl-tRNA(Gly) + AMP + diphosphate. The sequence is that of Glycine--tRNA ligase beta subunit from Baumannia cicadellinicola subsp. Homalodisca coagulata.